A 278-amino-acid polypeptide reads, in one-letter code: uncharacterized protein (278 aa).

10 helical membrane-spanning segments follow: residues 1–21 (MLEI…GIAY), 30–50 (AFTA…PLAL), 56–76 (VVID…SFYI), 92–112 (IALP…TVIY), 116–136 (LSLN…IIYG), 146–166 (LFYA…LDFL), 170–190 (LPVS…LSFT), 209–229 (GIFL…SSSW), 230–250 (NVVQ…AIFL), and 258–278 (LVAG…PPLQ). EamA domains follow at residues 12–136 (ICWA…IIYG) and 154–274 (FSWA…LLLL).

It belongs to the EamA transporter family.

The protein localises to the cell membrane. This is an uncharacterized protein from Archaeoglobus fulgidus (strain ATCC 49558 / DSM 4304 / JCM 9628 / NBRC 100126 / VC-16).